The following is a 293-amino-acid chain: Kynurenine formamidase (293 aa).

Residues 84 to 88 (HGGYW) carry the HGGXW motif. The active-site Nucleophile is the Ser-153. Active-site residues include Asp-236 and His-268.

It belongs to the kynurenine formamidase family. Homodimer.

The protein resides in the cytoplasm. The protein localises to the cytosol. It is found in the nucleus. The enzyme catalyses N-formyl-L-kynurenine + H2O = L-kynurenine + formate + H(+). It participates in amino-acid degradation; L-tryptophan degradation via kynurenine pathway; L-kynurenine from L-tryptophan: step 2/2. Its function is as follows. Catalyzes the hydrolysis of N-formyl-L-kynurenine to L-kynurenine, the second step in the kynurenine pathway of tryptophan degradation. Kynurenine may be further oxidized to nicotinic acid, NAD(H) and NADP(H). Required for elimination of toxic metabolites. The sequence is that of Kynurenine formamidase (afmid) from Danio rerio (Zebrafish).